The sequence spans 352 residues: Protein NDRG4 (352 aa).

Phosphoserine is present on residues Ser-298, Ser-317, and Ser-323. Residues 301–352 (AVPSASMTRLARSRTASLTSASSVDGSRPQPCTHSDSSEGMGQVNHTMEVSC) are disordered. The span at 308-323 (TRLARSRTASLTSASS) shows a compositional bias: low complexity. Over residues 330–352 (QPCTHSDSSEGMGQVNHTMEVSC) the composition is skewed to polar residues.

It belongs to the NDRG family. Expressed in the brain and heart, weakly in the kidney; most prominently in postnatal brain where it is expressed widely in the olfactory bulb, cerebral cortex, hippocampus, cerebellum, thalamus, and medulla oblongata.

The protein resides in the cytoplasm. It localises to the cytosol. In terms of biological role, contributes to the maintenance of intracerebral BDNF levels within the normal range, which is necessary for the preservation of spatial learning and the resistance to neuronal cell death caused by ischemic stress. May enhance growth factor-induced ERK1 and ERK2 phosphorylation, including that induced by NGF. May attenuate NGF-promoted ELK1 phosphorylation in a microtubule-dependent manner. This is Protein NDRG4 (Ndrg4) from Rattus norvegicus (Rat).